We begin with the raw amino-acid sequence, 316 residues long: Lipooligosaccharide heptosyltransferase 2 (316 aa).

This sequence belongs to the glycosyltransferase 9 family.

It catalyses the reaction an L-alpha-D-Hep-(1-&gt;5)-[alpha-Kdo-(2-&gt;4)]-alpha-Kdo-(2-&gt;6)-lipid A + ADP-L-glycero-beta-D-manno-heptose = an L-alpha-D-Hep-(1-&gt;3)-L-alpha-D-Hep-(1-&gt;5)-[alpha-Kdo-(2-&gt;4)]-alpha-Kdo-(2-&gt;6)-lipid A + ADP + H(+). Its pathway is bacterial outer membrane biogenesis; LOS core biosynthesis. Functionally, glycosyltransferase involved in the biosynthesis of the core oligosaccharide region of lipooligosaccharide (LOS). Catalyzes the addition of the second heptose unit to the heptosyl-Kdo2-lipid A module. This chain is Lipooligosaccharide heptosyltransferase 2, found in Campylobacter jejuni subsp. jejuni serotype O:6 (strain 81116 / NCTC 11828).